A 1777-amino-acid polypeptide reads, in one-letter code: Non-reducing polyketide synthase nscA (1777 aa).

The interval 27–261 (DLFRRLDQHS…PLPVYDGLCH (235 aa)) is N-terminal acylcarrier protein transacylase domain (SAT). Positions 396–829 (SSKLAIVGMA…GGNTTLLLED (434 aa)) constitute a Ketosynthase family 3 (KS3) domain. Active-site for beta-ketoacyl synthase activity residues include C569, H704, and H747. The interval 934 to 1212 (AFTGQGAYYH…SAIPSCRRNE (279 aa)) is malonyl-CoA:ACP transacylase (MAT) domain. The segment at 1297–1616 (TSLVHQITAE…RLLMDRFFSP (320 aa)) is product template (PT) domain. The segment at 1301-1437 (HQITAETVEA…ATIRFEDPEA (137 aa)) is N-terminal hotdog fold. The PKS/mFAS DH domain maps to 1301–1611 (HQITAETVEA…FRRVPRLLMD (311 aa)). H1333 acts as the Proton acceptor; for dehydratase activity in catalysis. The tract at residues 1465–1611 (ASRLSKPLAY…FRRVPRLLMD (147 aa)) is C-terminal hotdog fold. The Proton donor; for dehydratase activity role is filled by D1522. The disordered stretch occupies residues 1674 to 1704 (LLATSSKSSTPKESPIVTPAESERAEPVDNS). The span at 1677-1688 (TSSKSSTPKESP) shows a compositional bias: low complexity. One can recognise a Carrier domain in the interval 1700-1777 (PVDNSMTSQC…EMTAWIEEYC (78 aa)). S1737 bears the O-(pantetheine 4'-phosphoryl)serine mark.

Pantetheine 4'-phosphate serves as cofactor.

The protein operates within secondary metabolite biosynthesis. In terms of biological role, non-reducing polyketide synthase; part of the gene cluster that mediates the biosynthesis of neosartoricin B, a prenylated anthracenone that probably exhibits T-cell antiproliferative activity, suggestive of a physiological role as an immunosuppressive agent. The non-reducing polyketide synthase nscA probably synthesizes and cyclizes the decaketide backbone. The hydrolase nscB then mediates the product release through hydrolysis followed by spontaneous decarboxylation. The prenyltransferase nscD catalyzes the addition of the dimethylallyl group to the aromatic C5. The FAD-dependent monooxygenase nscC is then responsible for the stereospecific hydroxylation at C2. Neosartoricin B can be converted into two additional compounds neosartoricins C and D. Neosartoricin C is a spirocyclic compound that is cyclized through the attack of C3 hydroxyl on C14, followed by dehydration. On the other hand, neosartoricin D is a further cyclized compound in which attack of C2 on C14 in neosartoricin C results in the formation of the acetal-containing dioxabicyclo-octanone ring. Both of these compounds are novel and possibly represent related metabolites of the gene cluster. This Trichophyton equinum (strain ATCC MYA-4606 / CBS 127.97) (Horse ringworm fungus) protein is Non-reducing polyketide synthase nscA.